Here is a 342-residue protein sequence, read N- to C-terminus: Dihydroorotate dehydrogenase (quinone) (342 aa).

FMN contacts are provided by residues 61–65 and threonine 85; that span reads AGLDK. Lysine 65 provides a ligand contact to substrate. 110–114 provides a ligand contact to substrate; the sequence is NRMGF. The FMN site is built by asparagine 138 and asparagine 171. Position 171 (asparagine 171) interacts with substrate. Catalysis depends on serine 174, which acts as the Nucleophile. A substrate-binding site is contributed by asparagine 176. Lysine 216 and threonine 244 together coordinate FMN. Substrate is bound at residue 245-246; sequence NT. FMN is bound by residues glycine 267, glycine 296, and 317-318; that span reads YS.

This sequence belongs to the dihydroorotate dehydrogenase family. Type 2 subfamily. In terms of assembly, monomer. Requires FMN as cofactor.

It localises to the cell membrane. The enzyme catalyses (S)-dihydroorotate + a quinone = orotate + a quinol. The protein operates within pyrimidine metabolism; UMP biosynthesis via de novo pathway; orotate from (S)-dihydroorotate (quinone route): step 1/1. Catalyzes the conversion of dihydroorotate to orotate with quinone as electron acceptor. The protein is Dihydroorotate dehydrogenase (quinone) of Pseudomonas paraeruginosa (strain DSM 24068 / PA7) (Pseudomonas aeruginosa (strain PA7)).